The following is a 605-amino-acid chain: MAGPGPTFPLHRLVWANRHRELEAALHSHQHDIEQEDPRGRTPLELAVSLGNLESVRVLLRHNANVGKENRQGWAVLQEAVSTGDPEMVQLVLQYRDYQRATQRLAGIPELLNKLRQAPDFYVEMKWEFTSWVPLVSKMCPSDVYRVWKRGESLRVDTSLLGFEHMTWQRGRRSFIFKGQEAGALVMEVDHDRQVVHVETLGLTLQEPETLLAAMRPSEEHVASRLTSPIVSTHLDTRNVAFERNKCGIWGWRSEKMETVSGYEAKVYSATNVELVTRTRTEHLSDQDKSRSKAGKTPFQSFLGMAQQHSSHTGAPVQQAASPTNPTAISPEEYFDPNFSLESRNIGRPIEMSSKVQRFKATLWLSEEHPLSLGDQVTPIIDLMAISNAHFAKLRDFITLRLPPGFPVKIEIPLFHVLNARITFSNLCGCDEPLSSVWVPAPSSAVAASGNPFPCEVDPTVFEVPNGYSVLGMERNEPLRDEDDDLLQFAIQQSLLEAGTEAEQVTVWEALTNTRPGARPPPQATVYEEQLQLERALQESLQLSTEPRGPGSPPRTPPAPGPPSFEEQLRLALELSSREQEERERRGQQEEEDLQRILQLSLTEH.

ANK repeat units lie at residues 39–68 (RGRTPLELAVSLGNLESVRVLLRHNANVGK) and 72–101 (QGWAVLQEAVSTGDPEMVQLVLQYRDYQRA). The tract at residues 306-333 (AQQHSSHTGAPVQQAASPTNPTAISPEE) is disordered. The span at 319 to 328 (QAASPTNPTA) shows a compositional bias: polar residues. UIM domains are found at residues 482 to 501 (EDDDLLQFAIQQSLLEAGTE) and 528 to 547 (EEQLQLERALQESLQLSTEP). The disordered stretch occupies residues 541–605 (LQLSTEPRGP…RILQLSLTEH (65 aa)). Residues 550-563 (PGSPPRTPPAPGPP) show a composition bias toward pro residues. At S552 the chain carries Phosphoserine. Residue T556 is modified to Phosphothreonine. Residues 564–575 (SFEEQLRLALEL) show a composition bias toward low complexity. 2 consecutive UIM domains span residues 564–583 (SFEEQLRLALELSSREQEER) and 589–605 (QEEEDLQRILQLSLTEH). Residues 576–589 (SSREQEERERRGQQ) are compositionally biased toward basic and acidic residues.

In terms of assembly, interacts with EGFR (ubiquitinated); the interaction is direct and may regulate EGFR internalization.

It localises to the cell membrane. The protein localises to the late endosome. In terms of biological role, ubiquitin-binding protein that specifically recognizes and binds 'Lys-63'-linked ubiquitin. Does not bind 'Lys-48'-linked ubiquitin. Positively regulates the internalization of ligand-activated EGFR by binding to the Ub moiety of ubiquitinated EGFR at the cell membrane. The sequence is that of Ankyrin repeat domain-containing protein 13D (ANKRD13D) from Homo sapiens (Human).